The following is a 100-amino-acid chain: MIIKNNDGESTISGKAITLPTPMIFPPPLFIRFIQYKTDGKLWSNENFEINSGKVECNGEDYELVQSRCITQKIDDDSENVMDIRIMPSRPLNRDLPYFN.

This sequence belongs to the csb family.

This is an uncharacterized protein from Dictyostelium discoideum (Social amoeba).